Consider the following 218-residue polypeptide: Oxidoreductase claN (218 aa).

The NADP(+) site is built by K38, D57, and N82. Residue S134 is the Proton donor of the active site. NADP(+) is bound by residues Y148, K152, and T183. Catalysis depends on Y148, which acts as the Proton acceptor. K152 functions as the Lowers pKa of active site Tyr in the catalytic mechanism.

It belongs to the short-chain dehydrogenases/reductases (SDR) family.

It participates in pigment biosynthesis. Its function is as follows. Oxidoreductase; part of the gene cluster that mediates the biosynthesis of the bianthraquinone cladofulvin, a conidial pigment not required for virulence but that plays a role in fitness and resistance to environmental stresses including UV light and low-temperature stress. The pathway begins with the synthesis of atrochrysone thioester by the polyketide synthase (PKS) claG. The atrochrysone carboxyl ACP thioesterase claF then breaks the thioester bond and releases the atrochrysone carboxylic acid from claG. This compound is decarboxylated by claH to yield emodin, which is further converted to chrysophanol hydroquinone by the reductase claC and the dehydratase claB. The cytochrome P450 monooxygenase claM then catalyzes the dimerization of nataloe-emodin to cladofulvin. The sequence is that of Oxidoreductase claN from Passalora fulva (Tomato leaf mold).